We begin with the raw amino-acid sequence, 289 residues long: Ribosomal RNA small subunit methyltransferase A (289 aa).

His27, Leu29, Gly54, Glu76, Asp102, and Asn123 together coordinate S-adenosyl-L-methionine.

The protein belongs to the class I-like SAM-binding methyltransferase superfamily. rRNA adenine N(6)-methyltransferase family. RsmA subfamily.

The protein localises to the cytoplasm. It catalyses the reaction adenosine(1518)/adenosine(1519) in 16S rRNA + 4 S-adenosyl-L-methionine = N(6)-dimethyladenosine(1518)/N(6)-dimethyladenosine(1519) in 16S rRNA + 4 S-adenosyl-L-homocysteine + 4 H(+). In terms of biological role, specifically dimethylates two adjacent adenosines (A1518 and A1519) in the loop of a conserved hairpin near the 3'-end of 16S rRNA in the 30S particle. May play a critical role in biogenesis of 30S subunits. This chain is Ribosomal RNA small subunit methyltransferase A, found in Maricaulis maris (strain MCS10) (Caulobacter maris).